A 213-amino-acid chain; its full sequence is Response regulator GacA (213 aa).

A Response regulatory domain is found at 3–119; it reads RVLVVDDHDL…EMVQAIRLVF (117 aa). Aspartate 54 bears the 4-aspartylphosphate mark. One can recognise an HTH luxR-type domain in the interval 142 to 207; sequence SDSPFDALSE…ELTLLAVRHG (66 aa). The segment at residues 166–185 is a DNA-binding region (H-T-H motif); it reads VQIISDKLCLSPKTVNTYRY.

In terms of processing, phosphorylated by GacS.

Member of the two-component regulatory system GacA/GacS which controls the expression of secondary metabolites and extracellular products. Acts (probably primarily) by activating expression of CsrA1 and CsrA2 antagonist small RNAs (sRNA) RsmX, RsmY and RsmZ which bind to and prevent translation repression by CsrA1 and CsrA2. Involved in the regulation of secondary metabolism and in the synthesis of the antifungal factors cyanide, 2,4-diacetylphloroglucinol and pyoluteorin. Involved in synthesis of the autoinducing signal (unrelated to N-acylhomoserine lactones, induces the Gac/Csr cascade). Exercises positive post-transcriptional control over the hcnABC and aprA genes; acts upstream of CsrA2 (rsmA). Controls expression of csrA1 (rsmE) and csrA2. The polypeptide is Response regulator GacA (Pseudomonas protegens (strain DSM 19095 / LMG 27888 / CFBP 6595 / CHA0)).